Consider the following 249-residue polypeptide: 2,3-bisphosphoglycerate-dependent phosphoglycerate mutase (249 aa).

Substrate contacts are provided by residues 8–15 (RHGESTWN), 21–22 (TG), Arg-60, 87–90 (ERHY), Lys-98, 114–115 (RR), and 183–184 (GN). Residue His-9 is the Tele-phosphohistidine intermediate of the active site. Glu-87 acts as the Proton donor/acceptor in catalysis.

Belongs to the phosphoglycerate mutase family. BPG-dependent PGAM subfamily. As to quaternary structure, homodimer.

The enzyme catalyses (2R)-2-phosphoglycerate = (2R)-3-phosphoglycerate. It functions in the pathway carbohydrate degradation; glycolysis; pyruvate from D-glyceraldehyde 3-phosphate: step 3/5. In terms of biological role, catalyzes the interconversion of 2-phosphoglycerate and 3-phosphoglycerate. The chain is 2,3-bisphosphoglycerate-dependent phosphoglycerate mutase from Burkholderia mallei (strain NCTC 10247).